Consider the following 225-residue polypeptide: Thymidylate kinase (225 aa).

9–16 (GIEGCGKT) is a binding site for ATP.

Belongs to the thymidylate kinase family.

It catalyses the reaction dTMP + ATP = dTDP + ADP. In terms of biological role, phosphorylation of dTMP to form dTDP in both de novo and salvage pathways of dTTP synthesis. This Citrifermentans bemidjiense (strain ATCC BAA-1014 / DSM 16622 / JCM 12645 / Bem) (Geobacter bemidjiensis) protein is Thymidylate kinase.